The chain runs to 906 residues: Probable helicase HelY (906 aa).

Residues 26-184 (CSALERGHGV…WIQTVRGDTT (159 aa)) enclose the Helicase ATP-binding domain. 39–46 (APTGAGKT) is a binding site for ATP. The DEVH box signature appears at 132 to 135 (DEVH). One can recognise a Helicase C-terminal domain in the interval 259 to 463 (GRPEVIAKLD…SYNMTINLVH (205 aa)).

The protein belongs to the helicase family. SKI2 subfamily.

In Mycobacterium tuberculosis (strain CDC 1551 / Oshkosh), this protein is Probable helicase HelY (helY).